The chain runs to 35 residues: U1-theraphotoxin-Hhn1a (35 aa).

3 disulfide bridges follow: cysteine 2/cysteine 16, cysteine 9/cysteine 21, and cysteine 15/cysteine 28.

This sequence belongs to the neurotoxin 10 (Hwtx-1) family. 24 (Hwtx-6) subfamily. As to expression, expressed by the venom gland.

Its subcellular location is the secreted. Functionally, gating-modifier toxin that dose-dependently inhibits inactivation of voltage-gated sodium channels and reduces the peak of sodium current in cockroach DUM neurons. In vivo, reversibly paralyzes cockroaches for several hours, paralyzes rat after intracerebroventricular injection and blocks the neuromuscular transmission of the isolated rat phrenic nerve-diaphragm preparation. The chain is U1-theraphotoxin-Hhn1a from Cyriopagopus hainanus (Chinese bird spider).